The chain runs to 153 residues: 6,7-dimethyl-8-ribityllumazine synthase (153 aa).

5-amino-6-(D-ribitylamino)uracil is bound by residues phenylalanine 21, 55-57 (AFE), and 79-81 (TVI). 84 to 85 (AT) contacts (2S)-2-hydroxy-3-oxobutyl phosphate. The active-site Proton donor is histidine 87. 5-amino-6-(D-ribitylamino)uracil is bound at residue phenylalanine 112. A (2S)-2-hydroxy-3-oxobutyl phosphate-binding site is contributed by arginine 126.

This sequence belongs to the DMRL synthase family. Forms an icosahedral capsid composed of 60 subunits, arranged as a dodecamer of pentamers.

It catalyses the reaction (2S)-2-hydroxy-3-oxobutyl phosphate + 5-amino-6-(D-ribitylamino)uracil = 6,7-dimethyl-8-(1-D-ribityl)lumazine + phosphate + 2 H2O + H(+). It participates in cofactor biosynthesis; riboflavin biosynthesis; riboflavin from 2-hydroxy-3-oxobutyl phosphate and 5-amino-6-(D-ribitylamino)uracil: step 1/2. Catalyzes the formation of 6,7-dimethyl-8-ribityllumazine by condensation of 5-amino-6-(D-ribitylamino)uracil with 3,4-dihydroxy-2-butanone 4-phosphate. This is the penultimate step in the biosynthesis of riboflavin. The sequence is that of 6,7-dimethyl-8-ribityllumazine synthase from Bacillus cereus (strain G9842).